Here is a 776-residue protein sequence, read N- to C-terminus: MQGCQAGASIFFLIAANPDANHGASGGLGSRWIRTFSRIAPAGTQGMAGPLRSRVEELKRPWWRESSPLVLQHSEAARLAADALLERGEAAYLQVISEERELPFLSALDVDYMISHVRGVPELSEAQGSETLGQDLSMLSEVTSGTYFPMASDLDPPDLDLGWPEVPQATGFSPTQAVVHFQRDKGKSIKDLLRFLFSQAQTVVAVVMDVFTDMELLCDLMEASSRRGVPVYLLLAQEHLKYFLEMCYKMDLNGGHLVNMRVRSTCGDTYCSKAGRRFTGQALEKFVIIDCEQVVAGSYSFTWLCSQAHTSMVLQLRGHIVEDFDREFRCLYAESQPVEGFCSNEDPLMPQVPRPPPVTLAFGPAVPSATGSSPSSNSLSSIKHSPLLARSSYLALPGGGGRNDMGMGSSSPGPAYHEAGGQPSLYRQLSDPNHISPPGPYRANLSKLGASPWSQSSPALNHSSTSPLTLAVGSPLLPSSRPLLHFTRGVPALSRLPENGLPASQDPSLPRGRWVPGTALETVEEKKVSLSQSHDHLDRLSPFSKAGEAGGPNSRVTPDSSSLQHRELALDDRRLSLSHSHSQLDLLSQGQGVLESGSLRPGELSLENRKLSLNHNHGQLDLLPQNPKPQAPKIPSDAYSSAGPSKPSLDDRRQTLGHSQLDLITKFGPFRSEGPGPSCPPEPSPVRMAGVGSADEKRLTLGHSKLDLITKYHQLQGARQKPEPGIPGAPVSGHQNGSSNDLFAPEKRLTLGHSKLDLITKYNKSKFKQLRSRFES.

Residues 1-340 (MQGCQAGASI…LYAESQPVEG (340 aa)) form a DUF1669 region. Disordered stretches follow at residues 344-467 (NEDP…STSP), 494-565 (SRLP…SLQH), 617-653 (HGQLDLLPQNPKPQAPKIPSDAYSSAGPSKPSLDDRR), 669-694 (PFRSEGPGPSCPPEPSPVRMAGVGSA), and 716-745 (QGARQKPEPGIPGAPVSGHQNGSSNDLFAP). A compositionally biased stretch (low complexity) spans 368–385 (SATGSSPSSNSLSSIKHS). The segment covering 452–467 (PWSQSSPALNHSSTSP) has biased composition (polar residues). Basic and acidic residues predominate over residues 523–539 (VEEKKVSLSQSHDHLDR). The span at 554–563 (SRVTPDSSSL) shows a compositional bias: polar residues.

It belongs to the FAM83 family. As to quaternary structure, directly interacts (via DUF1669) with CSNK1A1 and CSNK1A1L. May interact with RAF1. Post-translationally, phosphorylated by CSNK1A1.

It localises to the cytoplasm. In terms of biological role, may play a role in MAPK signaling. In Mus musculus (Mouse), this protein is Protein FAM83C.